The chain runs to 124 residues: Succinate dehydrogenase cytochrome b556 subunit (124 aa).

The Cytoplasmic segment spans residues 1–29; it reads MTKTKQEIYNKRPTSPHLTIYKPQISSTL. A helical membrane pass occupies residues 30 to 55; sequence SILYRMTGVALFFAVSILVWWLILSK. Residues 56–67 are Periplasmic-facing; sequence YDNNYLQLAECC. Residues 68-88 traverse the membrane as a helical segment; that stretch reads IIKICLVAVSYAWFYHLCNGI. Position 83 (His-83) interacts with heme. Residues 89–103 are Cytoplasmic-facing; that stretch reads RHLFWDIGYGFSIKL. A helical transmembrane segment spans residues 104 to 124; it reads VNITGWCVVVGSVLLTVLLWV.

This sequence belongs to the cytochrome b560 family. Part of an enzyme complex containing four subunits: a flavoprotein, an iron-sulfur protein, plus two membrane-anchoring proteins, SdhC and SdhD. The complex can form homotrimers. It depends on heme as a cofactor.

The protein resides in the cell inner membrane. The protein operates within carbohydrate metabolism; tricarboxylic acid cycle. Membrane-anchoring subunit of succinate dehydrogenase (SDH). The chain is Succinate dehydrogenase cytochrome b556 subunit (sdhC) from Rickettsia conorii (strain ATCC VR-613 / Malish 7).